Here is a 116-residue protein sequence, read N- to C-terminus: Large ribosomal subunit protein bL19 (116 aa).

Belongs to the bacterial ribosomal protein bL19 family.

Functionally, this protein is located at the 30S-50S ribosomal subunit interface and may play a role in the structure and function of the aminoacyl-tRNA binding site. The protein is Large ribosomal subunit protein bL19 of Clostridium novyi (strain NT).